A 1572-amino-acid polypeptide reads, in one-letter code: Multiple epidermal growth factor-like domains protein 6 (1572 aa).

Positions 1–26 are cleaved as a signal peptide; the sequence is MPVGVEARASWRVVALTLLLLPAVPA. In terms of domain architecture, EMI spans 40 to 121; the sequence is MPHVCAEQKL…QKPGQEGCLS (82 aa). 36 disulfide bridges follow: cysteine 44–cysteine 107, cysteine 73–cysteine 79, cysteine 106–cysteine 119, cysteine 126–cysteine 137, cysteine 133–cysteine 146, cysteine 148–cysteine 161, cysteine 167–cysteine 178, cysteine 174–cysteine 187, cysteine 189–cysteine 202, cysteine 291–cysteine 302, cysteine 298–cysteine 311, cysteine 313–cysteine 326, cysteine 418–cysteine 429, cysteine 425–cysteine 438, cysteine 440–cysteine 453, cysteine 522–cysteine 535, cysteine 529–cysteine 542, cysteine 544–cysteine 553, cysteine 566–cysteine 578, cysteine 572–cysteine 585, cysteine 587–cysteine 596, cysteine 609–cysteine 621, cysteine 615–cysteine 628, cysteine 630–cysteine 639, cysteine 788–cysteine 797, cysteine 791–cysteine 804, cysteine 806–cysteine 815, cysteine 832–cysteine 840, cysteine 834–cysteine 847, cysteine 849–cysteine 858, cysteine 871–cysteine 884, cysteine 875–cysteine 891, cysteine 893–cysteine 902, cysteine 915–cysteine 927, cysteine 921–cysteine 934, and cysteine 936–cysteine 945. One can recognise an EGF-like 1; calcium-binding domain in the interval 122-162; the sequence is DVDECANANGGCEGPCCNTVGGFYCRCPPGYQLQGDGKTCQ. The EGF-like 2; calcium-binding domain maps to 163 to 203; sequence DVDECRSHNGGCQHRCVNTPGSYLCECKPGFRLHTDGRTCL. Residues 287–327 form the EGF-like 3; calcium-binding domain; that stretch reads DVDECALGLAQCAHGCLNTQGSFKCVCHAGYELGADGRQCY. The EGF-like 4; calcium-binding domain occupies 414–454; that stretch reads DVDECASGHSGCEHHCSNLAGSFQCFCEAGYRLDEDRRGCT. EGF-like domains lie at 518–554, 562–597, 605–640, 785–816, 829–859, 867–903, 911–946, 997–1032, 1040–1075, 1083–1118, 1131–1161, 1169–1204, 1256–1291, 1299–1334, 1342–1377, 1390–1420, and 1428–1463; these read FGHDCSLTCDDCRNGGTCFPGLDGCDCPEGWTGIICN, FGKNCSSPCICQNGGTCDPVSGACRCPPGVSGAHCE, YGKHCRKKCHCANRGRCHRLYGACLCDPGLYGRFCH, QEICPACEHGASCDPETGTCLCLPGFVGSRCQ, QMRCACANDGHCHPATGRCSCAPGWTGLSCQ, WGPDCIHPCNCSAGHGNCDAVSGLCLCEAGYEGPQCE, FGPGCEQKCRCEHGATCDHVSGACTCPAGWRGSFCE, FGLNCSQICTCFNGASCDPVLGQCHCAPGWMGPTCL, YGKNCQHSCLCRNGGSCDPILGQCTCPEGWTGLACE, HGAGCRLNCSCLNGGTCDRLTGHCRCPAGWTGDKCQ, EEHCACRKGATCHHVTGACLCPPGWRGSHCE, FGEACAQRCHCPPGASCHHVSGECHCPPGFTGPGCE, YGPGCEQICKCLNGGTCDPATGACYCPAGFLGADCS, FGPSCAHVCTCGQGAACDPVSGTCICPPGKTGGHCE, FGKGCEHKCACRNGGLCHATNGSCSCPLGWMGPHCE, LLECSCQNNGSCEPTSGACLCGPGFYGQACE, and HGSGCQRVCECQQGAPCDPVSGRCLCPAGFRGQFCE. N-linked (GlcNAc...) asparagine glycosylation is present at asparagine 1000. Disulfide bonds link cysteine 1001-cysteine 1013, cysteine 1007-cysteine 1020, cysteine 1022-cysteine 1031, cysteine 1044-cysteine 1056, cysteine 1050-cysteine 1063, cysteine 1065-cysteine 1074, cysteine 1087-cysteine 1099, cysteine 1093-cysteine 1106, cysteine 1108-cysteine 1117, cysteine 1134-cysteine 1142, cysteine 1136-cysteine 1149, cysteine 1151-cysteine 1160, cysteine 1173-cysteine 1185, cysteine 1177-cysteine 1192, cysteine 1194-cysteine 1203, cysteine 1260-cysteine 1272, cysteine 1266-cysteine 1279, cysteine 1281-cysteine 1290, cysteine 1303-cysteine 1315, cysteine 1309-cysteine 1322, cysteine 1324-cysteine 1333, cysteine 1346-cysteine 1358, cysteine 1352-cysteine 1365, cysteine 1367-cysteine 1376, cysteine 1393-cysteine 1401, cysteine 1395-cysteine 1408, cysteine 1410-cysteine 1419, cysteine 1432-cysteine 1444, cysteine 1438-cysteine 1451, and cysteine 1453-cysteine 1462.

The protein localises to the secreted. The sequence is that of Multiple epidermal growth factor-like domains protein 6 (Megf6) from Mus musculus (Mouse).